The primary structure comprises 126 residues: Nascent polypeptide-associated complex protein (126 aa).

Residues 10–77 (PRMMKQMQKM…AKKVAKEEEK (68 aa)) form the NAC-A/B domain.

This sequence belongs to the NAC-alpha family. As to quaternary structure, homodimer. Interacts with the ribosome. Binds ribosomal RNA.

Its function is as follows. Contacts the emerging nascent chain on the ribosome. The polypeptide is Nascent polypeptide-associated complex protein (Methanococcus maripaludis (strain DSM 14266 / JCM 13030 / NBRC 101832 / S2 / LL)).